Here is a 75-residue protein sequence, read N- to C-terminus: UPF0352 protein VF_1649 (75 aa).

It belongs to the UPF0352 family.

This chain is UPF0352 protein VF_1649, found in Aliivibrio fischeri (strain ATCC 700601 / ES114) (Vibrio fischeri).